We begin with the raw amino-acid sequence, 73 residues long: Small ribosomal subunit protein uS15c (73 aa).

The protein belongs to the universal ribosomal protein uS15 family. In terms of assembly, part of the 30S ribosomal subunit.

The protein resides in the plastid. The protein localises to the chloroplast. In Welwitschia mirabilis (Tree tumbo), this protein is Small ribosomal subunit protein uS15c (rps15).